A 33-amino-acid chain; its full sequence is Beta-theraphotoxin-Cm1a (33 aa).

Disulfide bonds link Cys-2–Cys-17, Cys-9–Cys-22, and Cys-16–Cys-29. The residue at position 33 (Leu-33) is a Leucine amide.

The protein belongs to the neurotoxin 10 (Hwtx-1) family. 04 (CcoTx1) subfamily. As to expression, expressed by the venom gland.

The protein resides in the secreted. In terms of biological role, inhibits many voltage-gated sodium channels and one voltage-gated calcium channel (Cav2.2/CACNA1B (IC(50)=400 nM), Nav1.2/SCN2A (IC(50)=3-70 nM), Nav1.1/SCN1A (IC(50)=523-1060 nM), Nav1.7/SCN9A (IC(50)=129.1-5120 nM), Nav1.4/SCN4A (IC(50)=263-888 nM or &gt;10 uM) and Nav1.5/SCN5A (IC(50)=188-323 nM or &gt;10 uM)). It acts by shifting the voltage dependence of channel activation to more depolarized potentials and by blocking the inward component of the sodium current. It shows moderate affinity for lipid bilayers. On Nav1.7/SCN9A, it has been shown to interact with the S3-S4 loop of domain DII (site 4). Is significantly more potent against Nav1.2/SCN2A than the other Nav channel subtypes. In vivo, this toxin causes general ataxia, lack of response to stimuli, and semiparalysis. After a few minutes, the mice are unable to stand, and breathing is reduced in rhythm and intensity. Symptoms gradually increase with progressive slowing of breathing and flaccid paralysis, death occurred within 10 to 20 minutes post injection. Animals remain totally flaccid, and no symptoms of excitatory neurotoxicity are observed. The sequence is that of Beta-theraphotoxin-Cm1a from Ceratogyrus marshalli (Straighthorned baboon tarantula).